A 496-amino-acid chain; its full sequence is Cytochrome f, chloroplastic (496 aa).

A chloroplast-targeting transit peptide spans 1–149 (MASLQTPVMV…VGAAAGSANA (149 aa)). Heme contacts are provided by tyrosine 150, cysteine 170, cysteine 173, and histidine 174. The chain crosses the membrane as a helical span at residues 462 to 481 (VQAFLFFSFTVLATQTLLVV).

The protein belongs to the cytochrome f family. In terms of assembly, interacts with plastocyanin and Rieske iron-sulfur protein. Requires heme as cofactor.

The protein resides in the plastid. The protein localises to the chloroplast thylakoid membrane. Its function is as follows. Translocates protons across the thylakoid membrane and transfers electrons from photosystem II to photosystem I. It receives electrons from the Rieske iron-sulfur protein and passes them to plastocyanin. In Euglena gracilis, this protein is Cytochrome f, chloroplastic (petA).